The primary structure comprises 88 residues: UPF0298 protein BA_4142/GBAA_4142/BAS3844 (88 aa).

Belongs to the UPF0298 family.

The protein resides in the cytoplasm. In Bacillus anthracis, this protein is UPF0298 protein BA_4142/GBAA_4142/BAS3844.